The chain runs to 378 residues: Prolargin (378 aa).

The N-terminal stretch at 1–21 (MRASFFWLLPLLLILASVAQG) is a signal peptide. The segment at 22 to 62 (QPTRPKPGIRRKPKPRPTPRFPQAPEPAEPTDLPPPLPPGP) is disordered. Residues 28 to 38 (PGIRRKPKPRP) show a composition bias toward basic residues. Over residues 39 to 62 (TPRFPQAPEPAEPTDLPPPLPPGP) the composition is skewed to pro residues. LRR repeat units follow at residues 91–110 (RRVP…NNFI), 111–134 (TELP…NNRI), 135–158 (RKVD…KNQL), 159–179 (EEVP…QNLI), 180–203 (SRIP…HNRL), 204–229 (SDGV…HNIL), 230–250 (RKMP…SNKI), 251–274 (ETIP…YNKL), 275–299 (SDRG…HNKI), 300–319 (SNVP…NNSI), 320–358 (EKIN…GNFL), and 359–378 (KPPI…SVVI). Asn120 carries an N-linked (GlcNAc...) asparagine glycan. Residues Asn285, Asn316, and Asn323 are each glycosylated (N-linked (GlcNAc...) asparagine). The cysteines at positions 328 and 369 are disulfide-linked.

Belongs to the small leucine-rich proteoglycan (SLRP) family. SLRP class II subfamily. In terms of assembly, binds the basement membrane heparan sulfate proteoglycan perlecan and triple helical collagens type I and type II. Glycosylated; contains heparan sulfate. In terms of tissue distribution, expressed in cartilage throughout both fetal development and postnatal life. It is also expressed in the developing embryo prior to skeletogenesis. In adult, highest expression in lung, lower levels in cardiac and skeletal muscle.

It is found in the secreted. Its subcellular location is the extracellular space. It localises to the extracellular matrix. In terms of biological role, may anchor basement membranes to the underlying connective tissue. The chain is Prolargin (Prelp) from Mus musculus (Mouse).